The following is a 480-amino-acid chain: Glutamate--tRNA ligase (480 aa).

Positions 8 to 18 (PSPTGPLHIGG) match the 'HIGH' region motif. The 'KMSKS' region signature appears at 249–253 (KMSKR). Lys-252 contributes to the ATP binding site.

This sequence belongs to the class-I aminoacyl-tRNA synthetase family. Glutamate--tRNA ligase type 1 subfamily. Monomer.

The protein resides in the cytoplasm. The catalysed reaction is tRNA(Glu) + L-glutamate + ATP = L-glutamyl-tRNA(Glu) + AMP + diphosphate. Catalyzes the attachment of glutamate to tRNA(Glu) in a two-step reaction: glutamate is first activated by ATP to form Glu-AMP and then transferred to the acceptor end of tRNA(Glu). The polypeptide is Glutamate--tRNA ligase (Carboxydothermus hydrogenoformans (strain ATCC BAA-161 / DSM 6008 / Z-2901)).